Consider the following 2774-residue polypeptide: Teneurin-2 (2774 aa).

The 375-residue stretch at methionine 1–cysteine 375 folds into the Teneurin N-terminal domain. Residues methionine 1–serine 379 lie on the Cytoplasmic side of the membrane. Serine 90 and serine 124 each carry phosphoserine. A disordered region spans residues threonine 111–asparagine 271. Residues serine 141–threonine 155 are compositionally biased toward polar residues. Position 155 is a phosphothreonine (threonine 155). Position 157 is a phosphoserine (serine 157). Residues asparagine 159 to glycine 168 are compositionally biased toward basic and acidic residues. Low complexity predominate over residues threonine 174–serine 188. Positions aspartate 202–aspartate 211 are enriched in polar residues. A compositionally biased stretch (low complexity) spans serine 229 to proline 240. The chain crosses the membrane as a helical span at residues alanine 380 to leucine 400. At glycine 401–arginine 2774 the chain is on the extracellular side. Asparagine 443 and asparagine 482 each carry an N-linked (GlcNAc...) asparagine glycan. EGF-like domains lie at aspartate 575 to alanine 603, alanine 605 to aspartate 634, proline 636 to glutamate 668, glutamate 669 to leucine 701, alanine 702 to serine 735, valine 738 to aspartate 766, valine 769 to threonine 797, and aspartate 808 to asparagine 841. Cystine bridges form between cysteine 576–cysteine 586, cysteine 580–cysteine 591, cysteine 593–cysteine 602, cysteine 611–cysteine 622, cysteine 624–cysteine 633, cysteine 640–cysteine 651, cysteine 645–cysteine 656, cysteine 658–cysteine 667, cysteine 672–cysteine 683, cysteine 677–cysteine 688, cysteine 690–cysteine 699, cysteine 710–cysteine 723, cysteine 725–cysteine 734, cysteine 739–cysteine 749, cysteine 743–cysteine 754, cysteine 756–cysteine 765, cysteine 770–cysteine 780, cysteine 774–cysteine 785, cysteine 787–cysteine 796, cysteine 810–cysteine 820, cysteine 814–cysteine 829, and cysteine 831–cysteine 840. Residues asparagine 925, asparagine 948, and asparagine 1267 are each glycosylated (N-linked (GlcNAc...) asparagine). 5 NHL repeats span residues leucine 1272–leucine 1316, alanine 1342–isoleucine 1386, leucine 1401–arginine 1452, leucine 1474–leucine 1501, and cysteine 1530–asparagine 1573. The YD 1 repeat unit spans residues tyrosine 1583–histidine 1602. A glycan (N-linked (GlcNAc...) asparagine) is linked at asparagine 1616. YD repeat units lie at residues tyrosine 1619–arginine 1639, tyrosine 1682–phenylalanine 1701, and tyrosine 1702–histidine 1724. Asparagine 1712, asparagine 1749, asparagine 1773, asparagine 1807, and asparagine 1892 each carry an N-linked (GlcNAc...) asparagine glycan. YD repeat units follow at residues tyrosine 1895–aspartate 1914, tyrosine 1936–glutamate 1954, tyrosine 1955–serine 1975, tyrosine 1982–aspartate 1999, tyrosine 2000–lysine 2021, tyrosine 2022–threonine 2039, tyrosine 2042–threonine 2062, tyrosine 2065–isoleucine 2085, tyrosine 2093–proline 2113, tyrosine 2119–tyrosine 2136, tyrosine 2137–valine 2163, tyrosine 2165–glutamine 2178, tyrosine 2179–threonine 2202, tyrosine 2205–serine 2225, tyrosine 2226–leucine 2246, tyrosine 2248–glycine 2268, tyrosine 2280–tyrosine 2300, and tyrosine 2302–phenylalanine 2322. Asparagine 1993 carries N-linked (GlcNAc...) asparagine glycosylation. A glycan (N-linked (GlcNAc...) asparagine) is linked at asparagine 2197. N-linked (GlcNAc...) asparagine glycosylation occurs at asparagine 2337. The YD 23 repeat unit spans residues tyrosine 2348–leucine 2389. N-linked (GlcNAc...) asparagine glycosylation is present at asparagine 2648.

Belongs to the tenascin family. Teneurin subfamily. As to quaternary structure, homodimer; disulfide-linked. Heterodimer with either TENM1 or TENM3. May also form heterodimer with TENM4. Interacts with ADGRL1 isoform 2. Derives from the membrane form by proteolytic processing. In terms of processing, derives from the plasma membrane form by proteolytic cleavage and translocates to the nucleus. Homophilic binding of the C-terminal extracellular domain stimulates its proteolytic cleavage and release in the cytoplasmic. Is subjected to rapid degradation by the proteasome pathway. In terms of tissue distribution, expressed in the brain (at protein level).

Its subcellular location is the cell membrane. It localises to the presynaptic cell membrane. The protein resides in the postsynaptic cell membrane. It is found in the endoplasmic reticulum. The protein localises to the golgi apparatus. Its subcellular location is the synapse. It localises to the cell projection. The protein resides in the dendritic spine. It is found in the filopodium. The protein localises to the growth cone. Its subcellular location is the nucleus. It localises to the PML body. Involved in neural development, regulating the establishment of proper connectivity within the nervous system. Acts as a ligand of the ADGRL1 and ADGRL3 receptors that are expressed at the surface of adjacent cells. Promotes the formation of filopodia and enlarged growth cone in neuronal cells. Mediates axon guidance and homophilic and heterophilic cell-cell adhesion. May function as a cellular signal transducer. Its function is as follows. Induces gene transcription inhibition. This is Teneurin-2 (Tenm2) from Rattus norvegicus (Rat).